The primary structure comprises 220 residues: Deoxyribose-phosphate aldolase (220 aa).

The active-site Proton donor/acceptor is the D89. Residue K151 is the Schiff-base intermediate with acetaldehyde of the active site. Catalysis depends on K180, which acts as the Proton donor/acceptor.

The protein belongs to the DeoC/FbaB aldolase family. DeoC type 1 subfamily.

It is found in the cytoplasm. It carries out the reaction 2-deoxy-D-ribose 5-phosphate = D-glyceraldehyde 3-phosphate + acetaldehyde. Its pathway is carbohydrate degradation; 2-deoxy-D-ribose 1-phosphate degradation; D-glyceraldehyde 3-phosphate and acetaldehyde from 2-deoxy-alpha-D-ribose 1-phosphate: step 2/2. Functionally, catalyzes a reversible aldol reaction between acetaldehyde and D-glyceraldehyde 3-phosphate to generate 2-deoxy-D-ribose 5-phosphate. This chain is Deoxyribose-phosphate aldolase, found in Staphylococcus saprophyticus subsp. saprophyticus (strain ATCC 15305 / DSM 20229 / NCIMB 8711 / NCTC 7292 / S-41).